A 93-amino-acid chain; its full sequence is MAPSARNRKPGARSMAKAAALRKPKKKVNPLDKDGITYIDYKDTALLRKFISDRGKIRARRVTGVTSQQQRQIARAVKNAREMALLPYTATAR.

A compositionally biased stretch (basic residues) spans 1-11 (MAPSARNRKPG). The interval 1 to 27 (MAPSARNRKPGARSMAKAAALRKPKKK) is disordered.

The protein belongs to the bacterial ribosomal protein bS18 family. Part of the 30S ribosomal subunit. Forms a tight heterodimer with protein bS6.

In terms of biological role, binds as a heterodimer with protein bS6 to the central domain of the 16S rRNA, where it helps stabilize the platform of the 30S subunit. This Salinispora tropica (strain ATCC BAA-916 / DSM 44818 / JCM 13857 / NBRC 105044 / CNB-440) protein is Small ribosomal subunit protein bS18.